We begin with the raw amino-acid sequence, 362 residues long: P2Y purinoceptor 1 (362 aa).

Residues 1–40 (MTEALISAALNGTQPELLAGGWAAGNATTKCSLTKTGFQF) lie on the Extracellular side of the membrane. N-linked (GlcNAc...) asparagine glycans are attached at residues Asn-11 and Asn-26. 2 disulfides stabilise this stretch: Cys-31-Cys-285 and Cys-113-Cys-191. ADP is bound at residue Lys-35. The helical transmembrane segment at 41–63 (YYLPTVYILVFITGFLGNSVAIW) threads the bilayer. Residues 64–76 (MFVFHMRPWSGIS) are Cytoplasmic-facing. A helical membrane pass occupies residues 77–98 (VYMFNLALADFLYVLTLPALIF). The Extracellular portion of the chain corresponds to 99–114 (YYFNKTDWIFGDVMCK). An N-linked (GlcNAc...) asparagine glycan is attached at Asn-102. The chain crosses the membrane as a helical span at residues 115-136 (LQRFIFHVNLYGSILFLTCISV). At 137-155 (HRYTGVVHPLKSLGRLKKK) the chain is on the cytoplasmic side. Residues 156–177 (NAVYVSSLVWALVVAVIAPILF) form a helical membrane-spanning segment. The Extracellular portion of the chain corresponds to 178-203 (YSGTGVRRNKTITCYDTTADEYLRSY). Asn-186 is a glycosylation site (N-linked (GlcNAc...) asparagine). 192-194 (YDT) contributes to the ADP binding site. The chain crosses the membrane as a helical span at residues 204–226 (FVYSMCTTVFMFCIPFIVILGCY). The Cytoplasmic portion of the chain corresponds to 227 to 249 (GLIVKALIYKDLDNSPLRRKSIY). Residues 250-273 (LVIIVLTVFAVSYLPFHVMKTLNL) traverse the membrane as a helical segment. ADP is bound by residues 272-276 (NLRAR), 292-295 (YATY), and Arg-299. Residues 274–292 (RARLDFQTPQMCAFNDKVY) are Extracellular-facing. A helical transmembrane segment spans residues 293–314 (ATYQVTRGLASLNSCVDPILYF). Residues 315–362 (LAGDTFRRRLSRATRKSSRRSEPNVQSKSEEMTLNILTEYKQNGDTSL) are Cytoplasmic-facing.

The protein belongs to the G-protein coupled receptor 1 family. As to expression, brain, spinal cord, gastrointestinal tract, spleen and leg muscle. Is not detected in the heart, liver, stomach, lung and kidney.

Its subcellular location is the cell membrane. Receptor for extracellular adenine nucleotides such as ADP. In platelets, binding to ADP leads to mobilization of intracellular calcium ions via activation of phospholipase C, a change in platelet shape, and ultimately platelet aggregation. The polypeptide is P2Y purinoceptor 1 (P2RY1) (Gallus gallus (Chicken)).